A 280-amino-acid polypeptide reads, in one-letter code: Cytochrome bc1 complex cytochrome c subunit (280 aa).

The helical transmembrane segment at Leu25–Leu45 threads the bilayer. Cytochrome c domains are found at residues Ala60 to Gly140 and Asn161 to Thr239. The heme c site is built by Cys73, Cys76, His77, Cys174, Cys177, and His178. The chain crosses the membrane as a helical span at residues Gly258–Ala278.

As to quaternary structure, the cytochrome bc1 complex is composed of a cytochrome b (QcrB), the Rieske iron-sulfur protein (QcrA) and a diheme cytochrome c (QcrC) subunit. Binds 2 heme c groups covalently per subunit.

It localises to the cell membrane. The catalysed reaction is a quinol + 2 Fe(III)-[cytochrome c](out) = a quinone + 2 Fe(II)-[cytochrome c](out) + 2 H(+)(out). In terms of biological role, cytochrome b subunit of the cytochrome bc1 complex, an essential component of the respiratory electron transport chain required for ATP synthesis. The bc1 complex catalyzes the oxidation of ubiquinol and the reduction of cytochrome c in the respiratory chain. The bc1 complex operates through a Q-cycle mechanism that couples electron transfer to generation of the proton gradient that drives ATP synthesis. The chain is Cytochrome bc1 complex cytochrome c subunit (qcrC) from Mycobacterium bovis (strain ATCC BAA-935 / AF2122/97).